Here is a 457-residue protein sequence, read N- to C-terminus: Serine/threonine-protein phosphatase 2A activator 2 (457 aa).

Disordered regions lie at residues 387–407 and 426–457; these read DAHGHIHPAGKPHAHGTGEGQ and AEQEKKRQQGNFSSTMLGEKPFGTGVRRIPFD. Basic residues predominate over residues 391-400; the sequence is HIHPAGKPHA.

The protein belongs to the PTPA-type PPIase family.

It is found in the cytoplasm. It carries out the reaction [protein]-peptidylproline (omega=180) = [protein]-peptidylproline (omega=0). In terms of biological role, PPIases accelerate the folding of proteins. It catalyzes the cis-trans isomerization of proline imidic peptide bonds in oligopeptides. Acts as a regulatory subunit for PP2A-like phosphatases modulating their activity or substrate specificity, probably by inducing a conformational change in the catalytic subunit, a direct target of the PPIase. Can reactivate inactive phosphatase PP2A-phosphatase methylesterase complexes (PP2Ai) in presence of ATP and Mg(2+) by dissociating the inactive form from the complex. The protein is Serine/threonine-protein phosphatase 2A activator 2 (RRD2) of Mycosarcoma maydis (Corn smut fungus).